We begin with the raw amino-acid sequence, 104 residues long: Integration host factor subunit beta (104 aa).

The protein belongs to the bacterial histone-like protein family. As to quaternary structure, heterodimer of an alpha and a beta chain.

Its function is as follows. This protein is one of the two subunits of integration host factor, a specific DNA-binding protein that functions in genetic recombination as well as in transcriptional and translational control. This is Integration host factor subunit beta (ihfB) from Neisseria gonorrhoeae.